A 388-amino-acid chain; its full sequence is MAAISARPLTQKALKVASPDTLHLVADAPVPTLDQDDSVLIRVVCVAINPVDGKSAELSPTPGATSGTDFAGIVVALHGDAKSRTETADTIKTGDRVMGFVFGNNPHVLGNGAFAEYVTLPRRFLWRVPDHMSLEAAASLPVGIASVGMALHYLHISMSSLLQAVSRSIAAASASQHHDGAFDSDANVFILVYGGGTSTGAIAIQILKAAGFHPITCCSSESASRAKRLGAAATFDYQSATCGRDIRDYTNDSLTLAIDCLSESASMAICYEAIGSAGGRYVSLDPFPVRGCVRRSIVPDWICSFTQFGQSIPWAPPYNLDERPDDHRLAEEWYHLAQKLLDAELIEAPTLEIRSGGLLHVPEGVAAVKLGQIKRRKLVYHISEEALP.

51–54 provides a ligand contact to NADP(+); it reads VDGK. 142–149 is a binding site for substrate; sequence VGIASVGM. NADP(+) contacts are provided by residues 219 to 222, tyrosine 237, and 284 to 285; these read SSES and LD. 304–308 lines the substrate pocket; sequence SFTQF. NADP(+) is bound at residue 373 to 374; the sequence is IK.

It belongs to the zinc-containing alcohol dehydrogenase family. Monomer.

It participates in secondary metabolite biosynthesis. In terms of biological role, trans-enoyl reductase; part of the gene cluster that mediates the biosynthesis of tenellin-type 2-pyridones, iron-chelating compounds involved in iron stress tolerance, competition with the natural competitor fungus Metarhizium robertsii and insect hosts infection. TenC collaborates with the hybrid PKS-NRPS synthetase tenS to catalyze the assembly of the polyketide-amino acid backbone, since tenS lacks a designated enoylreductase (ER) domain. Upon formation of the polyketide backbone on the thiotemplate of tenS, the triketide is transferred to the NRPS module and linked to tyrosine to produce the pyrrolidine-2-dione intermediates, including pretellinin A, 11-hydropretellenin A, 12-hydropretellenin A, 13-hydropretellenin A, 14-hydropretellenin A, 12-oxopretellenin A and prototellinin D. The pathway begins with the assembly of the polyketide-amino acid backbone by the hybrid PKS-NRPS tenS with the help of the enoyl reductase tenC. These enzymes catalyze the synthesis of the pyrrolidine-2-dione intermediates pretellinin A, 11-hydropretellenin A, 12-hydropretellenin A, 13-hydropretellenin A, 14-hydropretellenin A, 12-oxopretellenin A and prototellinin D. The cytochrome P450 monooxygenase tenA then catalyzes an oxidative ring expansion of pretenellin A and 14-hydropretellenin A to form the 2-pyridone core, leading to pretenellin B and pyridovericin, respectively. The cytochrome P450 monooxygenase tenB is then required for the selective N-hydroxylation of the 2-pyridone nitrogen of yield tellinin and 15-hydroxytellenin (15-HT), respectively. The UDP-glucosyltransferase GT1 and the methyltransferase MT1, located outside the tenS gene cluster, contribute to the stepwise glycosylation and methylation of 15-HT to obtain the glycoside pyridovericin-N-O-(4-O-methyl-beta-D-glucopyranoside) (PMGP). Additional related compounds such as 1-O-methyl-15-HT, (8Z)-1-O-methyl-15-HT, and O-methyltenellin A are also produced but the enzymes involved in their biosynthesis have still to be determined. This chain is Trans-enoyl reductase tenC, found in Beauveria bassiana (strain ARSEF 2860) (White muscardine disease fungus).